Reading from the N-terminus, the 235-residue chain is Rab-like protein 3 (235 aa).

Positions 1-235 (MASLDRVKVL…GGNFKSLHYD (235 aa)) are small GTPase-like. GTP-binding positions include 16 to 21 (GVGKSS), 148 to 150 (KLD), and 179 to 180 (DC).

This sequence belongs to the small GTPase superfamily. Rab family. Homodimer.

Its function is as follows. Required for KRAS signaling regulation and modulation of cell proliferation. Regulator of KRAS prenylation, and probably prenylation of other small GTPases. Required for lymphocyte development and function. Not required for myeloid cell development. This Xenopus tropicalis (Western clawed frog) protein is Rab-like protein 3 (rabl3).